Reading from the N-terminus, the 525-residue chain is uncharacterized protein (525 aa).

6 helical membrane passes run F7–I29, L34–L51, G64–F82, L92–F114, V121–G143, and L148–A170. RCK C-terminal domains lie at K178 to V257 and E259 to D341. Helical transmembrane passes span A351 to A370, G374 to H396, L416 to V438, L443 to W465, and S502 to L524.

This sequence belongs to the AAE transporter (TC 2.A.81) family.

The protein resides in the cell membrane. This is an uncharacterized protein from Cutibacterium acnes (strain DSM 16379 / KPA171202) (Propionibacterium acnes).